We begin with the raw amino-acid sequence, 397 residues long: Odorant receptor 2a (397 aa).

Topologically, residues 1-38 (MEKQEDFKLNTHSAVYYHWRVWELTGLMRPPGVSSLLY) are cytoplasmic. The chain crosses the membrane as a helical span at residues 39–59 (VVYSITVNLVVTVLFPLSLLA). Topologically, residues 60–72 (RLLFTTNMAGLCE) are extracellular. The helical transmembrane segment at 73–92 (NLTITITDIVANLKFANVYM) threads the bilayer. Over 93–131 (VRKQLHEIRSLLRLMDARARLVGDPEEISALRKEVNIAQ) the chain is Cytoplasmic. The chain crosses the membrane as a helical span at residues 132-150 (GTFRTFASIFVFGTTLSCV). Topologically, residues 151–176 (RVVVRPDRELLYPAWFGVDWMHSTRN) are extracellular. Residues 177–197 (YVLINIYQLFGLIVQAIQNCA) form a helical membrane-spanning segment. At 198 to 272 (SDSYPPAFLC…IIQRVLSVPC (75 aa)) the chain is on the cytoplasmic side. The chain crosses the membrane as a helical span at residues 273-293 (MAQFVCSAAVQCTVAMHFLYV). Residues 294-301 (ADDHDHTA) are Extracellular-facing. Residues 302-322 (MIISIVFFSAVTLEVFVICYF) traverse the membrane as a helical segment. Over 323-363 (GDRMRTQSEALCDAFYDCNWIEQLPKFKRELLFTLARTQRP) the chain is Cytoplasmic. The helical transmembrane segment at 364–383 (SLIYAGNYIALSLETFEQVM) threads the bilayer. Topologically, residues 384–397 (RFTYSVFTLLLRAK) are extracellular.

The protein belongs to the insect chemoreceptor superfamily. Heteromeric odorant receptor channel (TC 1.A.69) family. Or2a subfamily. In terms of assembly, interacts with Orco. Complexes exist early in the endomembrane system in olfactory sensory neurons (OSNs), coupling these complexes to the conserved ciliary trafficking pathway. As to expression, expressed in 20 sensory neurons on the distal edge of the antenna.

It localises to the cell membrane. Functionally, odorant receptor which mediates acceptance or avoidance behavior, depending on its substrates. The odorant receptor repertoire encodes a large collection of odor stimuli that vary widely in identity, intensity, and duration. May form a complex with Orco to form odorant-sensing units, providing sensitive and prolonged odorant signaling and calcium permeability. This chain is Odorant receptor 2a (Or2a), found in Drosophila melanogaster (Fruit fly).